Here is a 221-residue protein sequence, read N- to C-terminus: Ependymin-2 (221 aa).

An N-terminal signal peptide occupies residues 1 to 21 (MQDFAFAALSIWLCLGATALA). 3 N-linked (GlcNAc...) asparagine glycosylation sites follow: asparagine 33, asparagine 73, and asparagine 97.

This sequence belongs to the ependymin family. In terms of processing, binds calcium through the terminal sialic acids. EPDs are synthesized in the meninx and secreted in the cerebrospinal fluid.

Its subcellular location is the secreted. Functionally, may play a role in neural plasticity. May be involved during axon regeneration. The sequence is that of Ependymin-2 (epd2) from Salmo salar (Atlantic salmon).